Consider the following 117-residue polypeptide: MAMTEESVDQVEVNCLCVQHGQSCNNTRCFVKEGLRANWFYNPVLEEFAIPDSYQEGHGVNVKITFSHRSRNLRHNGHDVICSYSHLGSHISIRCTCNKPRPHLSLIEAACSMYNLD.

The protein is Early E3 13.3 kDa protein of Canine adenovirus serotype 1 (strain Glaxo) (CAdV-1).